The chain runs to 579 residues: MTRVKDPEKLPDATGVYIFRDRDDRVLYVGKSISIRKRVSSYFREQENPRLRIMMRHLESIEYILTQNEKEALILESNLIKRYRPPYNVRLKDDKRYPFIKITDEEYPRVLIVRTIGRDSARYYGPFTDTGAVRRTLKLIKSLFRIRSCRRMDGPCLNSQIDLCYAPCDGRISREDYREIIEKVDLFFQGRYQEVIEVLEEEMKEASERLEFERAARIRDQIESIREVMERQHASFTDSIDQDIVALERGGDTSAVVVLQIRDGKITGKDDFILRGSAPRTEILEAFLKQYYAIPRRVPSEILTQYPVEDGVIAEWLSELRGEEVKIHSPEGGAGRRLLNIAWKNASVILKQKGRVRDALLQLKDDLKLPEIPRRMEGLDISNIAGESATGSVAVFIDGKPSSGSYRRYRISAQGPDDYAMMRELVERRYSSPELRKPDLVLIDGGKGQLGVALEALKNCGVHVPVVGIAKKREEVYLPGLSEPVDVDDGALQILRHLRDEAHRFAVKYHRTIRDRDSLESELDGIRGVGPVRKRALLEHFGSLDGVRDASVEELASIPGMTREVAERIHRHFSGDLAG.

Residues 12–89 (DATGVYIFRD…IKRYRPPYNV (78 aa)) enclose the GIY-YIG domain. The UVR domain maps to 193 to 228 (QEVIEVLEEEMKEASERLEFERAARIRDQIESIREV).

The protein belongs to the UvrC family. Interacts with UvrB in an incision complex.

The protein resides in the cytoplasm. Functionally, the UvrABC repair system catalyzes the recognition and processing of DNA lesions. UvrC both incises the 5' and 3' sides of the lesion. The N-terminal half is responsible for the 3' incision and the C-terminal half is responsible for the 5' incision. This is UvrABC system protein C from Methanothermobacter thermautotrophicus (strain ATCC 29096 / DSM 1053 / JCM 10044 / NBRC 100330 / Delta H) (Methanobacterium thermoautotrophicum).